The sequence spans 438 residues: Cell division cycle-associated 7-like protein (438 aa).

An Integrase domain-binding motif 1 (IBM1) motif is present at residues 9 to 33 (IPKEVADIFNAPSDDEEFVGFQDDV). S21 is subject to Phosphoserine. The interval 55–114 (ACLHSKYFTEELRRIFKEDTDSDNEDFEGFTESELNIGSNPELIESELSDGDKTHPMMSD) is PSIP1-binding. An Integrase domain-binding motif 2 (IBM2) motif is present at residues 62–88 (FTEELRRIFKEDTDSDNEDFEGFTESE). Residues 72–199 (EDTDSDNEDF…ESRAESQETS (128 aa)) are disordered. At T74 the chain carries Phosphothreonine. Acidic residues predominate over residues 74 to 85 (TDSDNEDFEGFT). At S76 the chain carries Phosphoserine. T85 is modified (phosphothreonine). Residues S100, S103, S113, S135, S136, S183, and S185 each carry the phosphoserine modification. Positions 113–123 (SDEEDDDDEEE) are enriched in acidic residues. Over residues 166–183 (TDLRREKSCRQPKEKEDS) the composition is skewed to basic and acidic residues. The tract at residues 201-223 (ALLKRAMNIKENKAMLAQLLAEL) is MYC-binding. Glycyl lysine isopeptide (Lys-Gly) (interchain with G-Cter in SUMO2) cross-links involve residues K210 and K213. Position 249 is a phosphoserine (S249).

In terms of assembly, interacts with MYC. Interacts (via IBM motifs) with PSIP1 (via IBD domain); phosphorylation increases its affinity for PSIP1. In terms of processing, phosphorylation increases its interaction with PSIP1.

Its subcellular location is the cytoplasm. The protein localises to the nucleus. Its function is as follows. Plays a role in transcriptional regulation as a repressor that inhibits monoamine oxidase A (MAOA) activity and gene expression by binding to the promoter. Plays an important oncogenic role in mediating the full transforming effect of MYC in medulloblastoma cells. Involved in apoptotic signaling pathways; May act downstream of P38-kinase and BCL-2, but upstream of CASP3/caspase-3 as well as CCND1/cyclin D1 and E2F1. This chain is Cell division cycle-associated 7-like protein (Cdca7l), found in Rattus norvegicus (Rat).